Reading from the N-terminus, the 116-residue chain is Large ribosomal subunit protein uL18 (116 aa).

This sequence belongs to the universal ribosomal protein uL18 family. As to quaternary structure, part of the 50S ribosomal subunit; part of the 5S rRNA/L5/L18/L25 subcomplex. Contacts the 5S and 23S rRNAs.

Its function is as follows. This is one of the proteins that bind and probably mediate the attachment of the 5S RNA into the large ribosomal subunit, where it forms part of the central protuberance. The sequence is that of Large ribosomal subunit protein uL18 from Pseudomonas entomophila (strain L48).